We begin with the raw amino-acid sequence, 529 residues long: CTP synthase (529 aa).

The segment at 1–267 (MKEAKFIFVT…DTQILEHFHL (267 aa)) is amidoligase domain. A CTP-binding site is contributed by Ser-15. Residue Ser-15 coordinates UTP. ATP-binding positions include 16–21 (SLGKGL) and Asp-73. Mg(2+) is bound by residues Asp-73 and Glu-141. CTP-binding positions include 148–150 (DIE), 188–193 (KTKPTQ), and Lys-224. Residues 188 to 193 (KTKPTQ) and Lys-224 each bind UTP. The 238-residue stretch at 292 to 529 (TVSIVGKYTE…SFVKAAIDKK (238 aa)) folds into the Glutamine amidotransferase type-1 domain. Residue Gly-354 participates in L-glutamine binding. Cys-381 (nucleophile; for glutamine hydrolysis) is an active-site residue. Residues 382–385 (LGMQ), Glu-405, and Arg-459 contribute to the L-glutamine site. Catalysis depends on residues His-504 and Glu-506.

This sequence belongs to the CTP synthase family. As to quaternary structure, homotetramer.

It carries out the reaction UTP + L-glutamine + ATP + H2O = CTP + L-glutamate + ADP + phosphate + 2 H(+). The catalysed reaction is L-glutamine + H2O = L-glutamate + NH4(+). The enzyme catalyses UTP + NH4(+) + ATP = CTP + ADP + phosphate + 2 H(+). Its pathway is pyrimidine metabolism; CTP biosynthesis via de novo pathway; CTP from UDP: step 2/2. With respect to regulation, allosterically activated by GTP, when glutamine is the substrate; GTP has no effect on the reaction when ammonia is the substrate. The allosteric effector GTP functions by stabilizing the protein conformation that binds the tetrahedral intermediate(s) formed during glutamine hydrolysis. Inhibited by the product CTP, via allosteric rather than competitive inhibition. Catalyzes the ATP-dependent amination of UTP to CTP with either L-glutamine or ammonia as the source of nitrogen. Regulates intracellular CTP levels through interactions with the four ribonucleotide triphosphates. In Wolbachia pipientis wMel, this protein is CTP synthase.